The primary structure comprises 179 residues: Translation initiation factor IF-3 (179 aa).

This sequence belongs to the IF-3 family. Monomer.

The protein resides in the cytoplasm. IF-3 binds to the 30S ribosomal subunit and shifts the equilibrium between 70S ribosomes and their 50S and 30S subunits in favor of the free subunits, thus enhancing the availability of 30S subunits on which protein synthesis initiation begins. The protein is Translation initiation factor IF-3 of Lactococcus lactis subsp. lactis (strain IL1403) (Streptococcus lactis).